The sequence spans 603 residues: O-acetyltransferase OatA (603 aa).

The next 11 helical transmembrane spans lie at 17-37, 45-65, 87-107, 148-168, 177-197, 211-231, 239-259, 268-288, 311-331, 333-353, and 382-402; these read YLPG…IYHL, GFLG…SLLI, LIPA…IFKP, LWSL…ITFL, IIQT…VIHF, TRLQ…PFAL, IVVS…TLFF, IYNG…AIAV, YSLY…YVQG, IPVY…EISY, and VLVI…FDAL. Residues S453, D575, and H578 contribute to the active site.

The protein belongs to the acyltransferase 3 family. In terms of assembly, monomer.

Its subcellular location is the cell membrane. Its function is as follows. Responsible for O-acetylation at the C(6)-hydroxyl group of N-acetylmuramyl residues, forming the corresponding N,6-O-diacetylmuramic acid of the peptidoglycan. O-acetylation of the peptidoglycan is the major determinant for lysozyme resistance. The chain is O-acetyltransferase OatA from Staphylococcus aureus (strain NCTC 8325 / PS 47).